Consider the following 362-residue polypeptide: S-adenosylmethionine decarboxylase proenzyme (362 aa).

Active-site residues include glutamate 11 and glutamate 14. Serine 71 acts as the Schiff-base intermediate with substrate; via pyruvic acid in catalysis. A Pyruvic acid (Ser); by autocatalysis modification is found at serine 71. Cysteine 85 (proton donor; for catalytic activity) is an active-site residue. Active-site proton acceptor; for processing activity residues include serine 234 and histidine 247.

The protein belongs to the eukaryotic AdoMetDC family. Pyruvate is required as a cofactor. Is synthesized initially as an inactive proenzyme. Formation of the active enzyme involves a self-maturation process in which the active site pyruvoyl group is generated from an internal serine residue via an autocatalytic post-translational modification. Two non-identical subunits are generated from the proenzyme in this reaction, and the pyruvate is formed at the N-terminus of the alpha chain, which is derived from the carboxyl end of the proenzyme. The post-translation cleavage follows an unusual pathway, termed non-hydrolytic serinolysis, in which the side chain hydroxyl group of the serine supplies its oxygen atom to form the C-terminus of the beta chain, while the remainder of the serine residue undergoes an oxidative deamination to produce ammonia and the pyruvoyl group blocking the N-terminus of the alpha chain.

It catalyses the reaction S-adenosyl-L-methionine + H(+) = S-adenosyl 3-(methylsulfanyl)propylamine + CO2. It functions in the pathway amine and polyamine biosynthesis; S-adenosylmethioninamine biosynthesis; S-adenosylmethioninamine from S-adenosyl-L-methionine: step 1/1. The chain is S-adenosylmethionine decarboxylase proenzyme (SAMDC) from Ipomoea batatas (Sweet potato).